The chain runs to 370 residues: Cyclic dehypoxanthine futalosine synthase (370 aa).

In terms of domain architecture, Radical SAM core spans 50 to 295 (TTFVIGRNVN…QSSWVTMGPE (246 aa)). The [4Fe-4S] cluster site is built by C64, C68, and C71.

Belongs to the radical SAM superfamily. MqnC family. The cofactor is [4Fe-4S] cluster.

It catalyses the reaction dehypoxanthine futalosine + S-adenosyl-L-methionine = cyclic dehypoxanthinylfutalosinate + 5'-deoxyadenosine + L-methionine + H(+). It functions in the pathway quinol/quinone metabolism; menaquinone biosynthesis. In terms of biological role, radical SAM enzyme that catalyzes the cyclization of dehypoxanthine futalosine (DHFL) into cyclic dehypoxanthine futalosine (CDHFL), a step in the biosynthesis of menaquinone (MK, vitamin K2). The polypeptide is Cyclic dehypoxanthine futalosine synthase (Halalkalibacterium halodurans (strain ATCC BAA-125 / DSM 18197 / FERM 7344 / JCM 9153 / C-125) (Bacillus halodurans)).